The sequence spans 287 residues: Energy-coupling factor transporter ATP-binding protein EcfA2 (287 aa).

The ABC transporter domain occupies 3–246 (VKFSQVSYVY…TNYVNQLHLD (244 aa)). 40 to 47 (GQTGSGKS) provides a ligand contact to ATP.

It belongs to the ABC transporter superfamily. Energy-coupling factor EcfA family. As to quaternary structure, forms a stable energy-coupling factor (ECF) transporter complex composed of 2 membrane-embedded substrate-binding proteins (S component), 2 ATP-binding proteins (A component) and 2 transmembrane proteins (T component).

It is found in the cell membrane. ATP-binding (A) component of a common energy-coupling factor (ECF) ABC-transporter complex. Unlike classic ABC transporters this ECF transporter provides the energy necessary to transport a number of different substrates. The chain is Energy-coupling factor transporter ATP-binding protein EcfA2 from Staphylococcus saprophyticus subsp. saprophyticus (strain ATCC 15305 / DSM 20229 / NCIMB 8711 / NCTC 7292 / S-41).